A 581-amino-acid polypeptide reads, in one-letter code: Adenine deaminase (581 aa).

This sequence belongs to the metallo-dependent hydrolases superfamily. Adenine deaminase family. Mn(2+) is required as a cofactor.

It catalyses the reaction adenine + H2O + H(+) = hypoxanthine + NH4(+). This is Adenine deaminase from Clostridium botulinum (strain Eklund 17B / Type B).